A 112-amino-acid polypeptide reads, in one-letter code: Gastrula zinc finger protein XlCGF16.1 (112 aa).

C2H2-type zinc fingers lie at residues 6–28 (YNCS…QKTH), 34–56 (FVCF…QRIH), 62–84 (FSCT…HKTH), and 90–112 (FLCF…HRTH).

This sequence belongs to the krueppel C2H2-type zinc-finger protein family.

It localises to the nucleus. May be involved in transcriptional regulation. This chain is Gastrula zinc finger protein XlCGF16.1, found in Xenopus laevis (African clawed frog).